The primary structure comprises 312 residues: Protein phosphatase PTC7 homolog fig (312 aa).

The 265-residue stretch at 42 to 306 (IQGSSKDQLA…DDITVILASV (265 aa)) folds into the PPM-type phosphatase domain. Mn(2+) contacts are provided by Asp83, Gly84, and Asp228.

It belongs to the PP2C family. Mg(2+) serves as cofactor. It depends on Mn(2+) as a cofactor.

The enzyme catalyses O-phospho-L-seryl-[protein] + H2O = L-seryl-[protein] + phosphate. It catalyses the reaction O-phospho-L-threonyl-[protein] + H2O = L-threonyl-[protein] + phosphate. The protein is Protein phosphatase PTC7 homolog fig of Drosophila mojavensis (Fruit fly).